The sequence spans 249 residues: 1-(5-phosphoribosyl)-5-[(5-phosphoribosylamino)methylideneamino] imidazole-4-carboxamide isomerase (249 aa).

The active-site Proton acceptor is the Asp-11. Catalysis depends on Asp-133, which acts as the Proton donor.

The protein belongs to the HisA/HisF family.

It localises to the cytoplasm. The enzyme catalyses 1-(5-phospho-beta-D-ribosyl)-5-[(5-phospho-beta-D-ribosylamino)methylideneamino]imidazole-4-carboxamide = 5-[(5-phospho-1-deoxy-D-ribulos-1-ylimino)methylamino]-1-(5-phospho-beta-D-ribosyl)imidazole-4-carboxamide. Its pathway is amino-acid biosynthesis; L-histidine biosynthesis; L-histidine from 5-phospho-alpha-D-ribose 1-diphosphate: step 4/9. The sequence is that of 1-(5-phosphoribosyl)-5-[(5-phosphoribosylamino)methylideneamino] imidazole-4-carboxamide isomerase from Haemophilus influenzae (strain 86-028NP).